Reading from the N-terminus, the 598-residue chain is Peroxisomal targeting signal receptor (598 aa).

Disordered regions lie at residues 1–54 (MSFM…GEMS), 135–154 (RGGS…MQGG), and 208–237 (AVGK…TTTE). Polar residues predominate over residues 9–22 (ECSTGRNPLSQFTK). A Glycyl cysteine thioester (Cys-Gly) (interchain with G-Cter in ubiquitin) cross-link involves residue Cys10. A Glycyl lysine isopeptide (Lys-Gly) (interchain with G-Cter in ubiquitin) cross-link involves residue Lys22. A compositionally biased stretch (basic and acidic residues) spans 23–35 (HTAEDRSLQHDRV). Positions 220-233 (AETATATETVTETE) are enriched in low complexity. 7 TPR repeats span residues 304 to 337 (PDPF…NTEH), 338 to 371 (AEAW…EPGN), 372 to 409 (LSAL…VVDQ), 410 to 447 (ARNQ…ANID), 448 to 481 (ADVQ…RPDD), 482 to 515 (ALLW…RPSF), and 516 to 549 (VRAR…HKVE).

It belongs to the peroxisomal targeting signal receptor family. In terms of processing, ubiquitination at Cys-10 is UBC4-independent but requires the presence of PEX4. Ubiquitination at Lys-22 is UBC4-dependent.

Its subcellular location is the cytoplasm. It localises to the peroxisome membrane. Functionally, binds to the C-terminal PTS1-type tripeptide peroxisomal targeting signal (SKL-type) and plays an essential role in peroxisomal protein import. The protein is Peroxisomal targeting signal receptor (PAY32) of Yarrowia lipolytica (strain CLIB 122 / E 150) (Yeast).